Reading from the N-terminus, the 209-residue chain is D-aminoacyl-tRNA deacylase 1 (209 aa).

Residues 139 to 140 (GP) carry the Gly-cisPro motif, important for rejection of L-amino acids motif. Positions 142 to 209 (TIELESPAPG…EGDVSSEREP (68 aa)) are disordered. Composition is skewed to basic and acidic residues over residues 159 to 170 (QLSKLEKQQQRK) and 181 to 194 (SSKERNAPRKEDRS). Ser197, Ser204, and Ser205 each carry phosphoserine.

This sequence belongs to the DTD family. In terms of assembly, homodimer. Interacts with CDC45 and TOPBP1. In terms of processing, preferentially phosphorylated in cells arrested early in S phase. Phosphorylation in the C-terminus weakens the interaction with CDC45.

Its subcellular location is the nucleus. The protein resides in the cytoplasm. It catalyses the reaction glycyl-tRNA(Ala) + H2O = tRNA(Ala) + glycine + H(+). The catalysed reaction is a D-aminoacyl-tRNA + H2O = a tRNA + a D-alpha-amino acid + H(+). Its function is as follows. An aminoacyl-tRNA editing enzyme that deacylates mischarged D-aminoacyl-tRNAs. Also deacylates mischarged glycyl-tRNA(Ala), protecting cells against glycine mischarging by AlaRS. Acts via tRNA-based rather than protein-based catalysis; rejects L-amino acids rather than detecting D-amino acids in the active site. By recycling D-aminoacyl-tRNA to D-amino acids and free tRNA molecules, this enzyme counteracts the toxicity associated with the formation of D-aminoacyl-tRNA entities in vivo and helps enforce protein L-homochirality. In terms of biological role, ATPase involved in DNA replication, may facilitate loading of CDC45 onto pre-replication complexes. This chain is D-aminoacyl-tRNA deacylase 1 (Dtd1), found in Mus musculus (Mouse).